The following is an 878-amino-acid chain: AP-5 complex subunit beta-1 (878 aa).

The tract at residues 234-260 is disordered; it reads RLQPQAPSWPAAEEGEGERSLTAREHS. The segment covering 250–260 has biased composition (basic and acidic residues); the sequence is GERSLTAREHS.

In terms of assembly, probably part of the adaptor protein complex 5 (AP-5), a tetramer composed of AP5B1, AP5M1, AP5S1 and AP5Z1. Interacts with ZFYVE26 and SPG11.

As part of AP-5, a probable fifth adaptor protein complex it may be involved in endosomal transport. This is AP-5 complex subunit beta-1 (AP5B1) from Homo sapiens (Human).